Consider the following 671-residue polypeptide: UvrABC system protein B (671 aa).

Positions 31–414 (DGFEQGEKAQ…ELNQTDHKVE (384 aa)) constitute a Helicase ATP-binding domain. 44–51 (GATGTGKT) is a binding site for ATP. A Beta-hairpin motif is present at residues 97 to 120 (YYDYYQPEAYVPQSDTYIEKDSSI). The Helicase C-terminal domain maps to 435–601 (QIDDLVGEVN…TIVKPIRDVI (167 aa)). Residues 630-665 (QNMIKTLTAQMQEAAKKLDFEEAANLRDAIMDLKKQ) form the UVR domain.

Belongs to the UvrB family. In terms of assembly, forms a heterotetramer with UvrA during the search for lesions. Interacts with UvrC in an incision complex.

The protein localises to the cytoplasm. In terms of biological role, the UvrABC repair system catalyzes the recognition and processing of DNA lesions. A damage recognition complex composed of 2 UvrA and 2 UvrB subunits scans DNA for abnormalities. Upon binding of the UvrA(2)B(2) complex to a putative damaged site, the DNA wraps around one UvrB monomer. DNA wrap is dependent on ATP binding by UvrB and probably causes local melting of the DNA helix, facilitating insertion of UvrB beta-hairpin between the DNA strands. Then UvrB probes one DNA strand for the presence of a lesion. If a lesion is found the UvrA subunits dissociate and the UvrB-DNA preincision complex is formed. This complex is subsequently bound by UvrC and the second UvrB is released. If no lesion is found, the DNA wraps around the other UvrB subunit that will check the other stand for damage. This is UvrABC system protein B from Lactobacillus johnsonii (strain CNCM I-12250 / La1 / NCC 533).